Here is a 239-residue protein sequence, read N- to C-terminus: 2,3,4,5-tetrahydropyridine-2,6-dicarboxylate N-acetyltransferase (239 aa).

Belongs to the transferase hexapeptide repeat family. DapH subfamily.

It catalyses the reaction (S)-2,3,4,5-tetrahydrodipicolinate + acetyl-CoA + H2O = L-2-acetamido-6-oxoheptanedioate + CoA. Its pathway is amino-acid biosynthesis; L-lysine biosynthesis via DAP pathway; LL-2,6-diaminopimelate from (S)-tetrahydrodipicolinate (acetylase route): step 1/3. Catalyzes the transfer of an acetyl group from acetyl-CoA to tetrahydrodipicolinate. This chain is 2,3,4,5-tetrahydropyridine-2,6-dicarboxylate N-acetyltransferase, found in Staphylococcus aureus (strain JH9).